The following is a 137-amino-acid chain: UPF0146 protein MJ0688 (137 aa).

Belongs to the UPF0146 family.

The chain is UPF0146 protein MJ0688 from Methanocaldococcus jannaschii (strain ATCC 43067 / DSM 2661 / JAL-1 / JCM 10045 / NBRC 100440) (Methanococcus jannaschii).